The chain runs to 452 residues: MKETIVAQATAPGRGGIGILRVSGPLATKVAQAILGKCPKPRMADYLPFKDADGTILDQGIALYFKSPNSFTGEDVLELQGHGGQVVLDLLLKRILQIDGIRLARPGEFSEQAFLNDKLDLAQAEAIADLIDATSEQAARSALKSLQGEFSKKVNELVDSVIYLRTYVEASIDFPDEEIDFLADGKIEANLRGIINQLENVRSEAKQGSILREGMKVVIAGRPNAGKSSLLNALAGREAAIVTDIAGTTRDVLREHIHIDGMPLHIIDTAGLRDATDEVERIGISRAWTEIEQADRIILMLDSSDPESADLSKVRSEFLAKLPSTLPVTIVRNKIDLNGEQASESEQGGYQIISLSAQTHDGVKLLRDHLKQAMGFQTGIEGGFLARRRHLDALEKAAEHLQIGLVQLTEFHAGELLAEELRLVQSYLSEITGQFTSDDLLGNIFSSFCIGK.

(6S)-5-formyl-5,6,7,8-tetrahydrofolate contacts are provided by Arg-21, Glu-78, and Lys-118. One can recognise a TrmE-type G domain in the interval 214–375 (GMKVVIAGRP…LRDHLKQAMG (162 aa)). Asn-224 lines the K(+) pocket. GTP is bound by residues 224 to 229 (NAGKSS), 243 to 249 (TDIAGTT), and 268 to 271 (DTAG). Ser-228 is a binding site for Mg(2+). K(+)-binding residues include Thr-243, Ile-245, and Thr-248. Residue Thr-249 participates in Mg(2+) binding. Lys-452 is a (6S)-5-formyl-5,6,7,8-tetrahydrofolate binding site.

The protein belongs to the TRAFAC class TrmE-Era-EngA-EngB-Septin-like GTPase superfamily. TrmE GTPase family. In terms of assembly, homodimer. Heterotetramer of two MnmE and two MnmG subunits. K(+) serves as cofactor.

It is found in the cytoplasm. Exhibits a very high intrinsic GTPase hydrolysis rate. Involved in the addition of a carboxymethylaminomethyl (cmnm) group at the wobble position (U34) of certain tRNAs, forming tRNA-cmnm(5)s(2)U34. This Haemophilus influenzae (strain 86-028NP) protein is tRNA modification GTPase MnmE.